Consider the following 243-residue polypeptide: 4-phosphopantoate--beta-alanine ligase (243 aa).

Residues arginine 15, arginine 37, aspartate 176 to asparagine 178, and arginine 182 to threonine 183 each bind ATP.

The protein belongs to the archaeal phosphopantothenate synthetase family. Homodimer.

The enzyme catalyses (R)-4-phosphopantoate + beta-alanine + ATP = (R)-4'-phosphopantothenate + AMP + diphosphate + H(+). The protein operates within cofactor biosynthesis; coenzyme A biosynthesis. Functionally, catalyzes the condensation of (R)-4-phosphopantoate and beta-alanine to 4'-phosphopantothenate in the CoA biosynthesis pathway. The sequence is that of 4-phosphopantoate--beta-alanine ligase from Methanospirillum hungatei JF-1 (strain ATCC 27890 / DSM 864 / NBRC 100397 / JF-1).